The following is a 302-amino-acid chain: Sulfate adenylyltransferase subunit 2 (302 aa).

Belongs to the PAPS reductase family. CysD subfamily. Heterodimer composed of CysD, the smaller subunit, and CysN.

It carries out the reaction sulfate + ATP + H(+) = adenosine 5'-phosphosulfate + diphosphate. Its pathway is sulfur metabolism; hydrogen sulfide biosynthesis; sulfite from sulfate: step 1/3. Functionally, with CysN forms the ATP sulfurylase (ATPS) that catalyzes the adenylation of sulfate producing adenosine 5'-phosphosulfate (APS) and diphosphate, the first enzymatic step in sulfur assimilation pathway. APS synthesis involves the formation of a high-energy phosphoric-sulfuric acid anhydride bond driven by GTP hydrolysis by CysN coupled to ATP hydrolysis by CysD. This chain is Sulfate adenylyltransferase subunit 2, found in Salmonella arizonae (strain ATCC BAA-731 / CDC346-86 / RSK2980).